We begin with the raw amino-acid sequence, 783 residues long: Probable galactinol--sucrose galactosyltransferase 5 (783 aa).

Phosphoserine is present on residues Ser-9 and Ser-11.

It belongs to the glycosyl hydrolases 36 family.

The enzyme catalyses alpha-D-galactosyl-(1-&gt;3)-1D-myo-inositol + sucrose = raffinose + myo-inositol. Transglycosidase operating by a ping-pong reaction mechanism. Involved in the synthesis of raffinose, a major soluble carbohydrate in seeds, roots and tubers. This is Probable galactinol--sucrose galactosyltransferase 5 (RFS5) from Arabidopsis thaliana (Mouse-ear cress).